The chain runs to 256 residues: Ubiquinone/menaquinone biosynthesis C-methyltransferase UbiE (256 aa).

S-adenosyl-L-methionine-binding positions include threonine 79, aspartate 100, and 128 to 129 (DA).

Belongs to the class I-like SAM-binding methyltransferase superfamily. MenG/UbiE family.

It catalyses the reaction a 2-demethylmenaquinol + S-adenosyl-L-methionine = a menaquinol + S-adenosyl-L-homocysteine + H(+). It carries out the reaction a 2-methoxy-6-(all-trans-polyprenyl)benzene-1,4-diol + S-adenosyl-L-methionine = a 5-methoxy-2-methyl-3-(all-trans-polyprenyl)benzene-1,4-diol + S-adenosyl-L-homocysteine + H(+). Its pathway is quinol/quinone metabolism; menaquinone biosynthesis; menaquinol from 1,4-dihydroxy-2-naphthoate: step 2/2. It functions in the pathway cofactor biosynthesis; ubiquinone biosynthesis. Functionally, methyltransferase required for the conversion of demethylmenaquinol (DMKH2) to menaquinol (MKH2) and the conversion of 2-polyprenyl-6-methoxy-1,4-benzoquinol (DDMQH2) to 2-polyprenyl-3-methyl-6-methoxy-1,4-benzoquinol (DMQH2). In Pseudomonas syringae pv. tomato (strain ATCC BAA-871 / DC3000), this protein is Ubiquinone/menaquinone biosynthesis C-methyltransferase UbiE.